A 2471-amino-acid chain; its full sequence is Probable polyketide synthase 24 (2471 aa).

A Ketosynthase family 3 (KS3) domain is found at 21 to 449 (ENLVAIVGVG…GSNCCLVLSQ (429 aa)). Active-site for beta-ketoacyl synthase activity residues include cysteine 190, histidine 332, and histidine 372. Residues 654–687 (GIKASFMLGHSLGEVTTAYCSGMIDIDQLCYLIY) are acyl/malonyl transferase. Serine 664 acts as the For acyl/malonyl transferase activity in catalysis. An N-terminal hotdog fold region spans residues 953–1075 (ISILGNSMQD…SNFHLNSNDN (123 aa)). The 293-residue stretch at 953–1245 (ISILGNSMQD…VKSLTPVKDP (293 aa)) folds into the PKS/mFAS DH domain. Residue histidine 987 is the Proton acceptor; for dehydratase activity of the active site. A C-terminal hotdog fold region spans residues 1094 to 1245 (NLSSIPWDEF…VKSLTPVKDP (152 aa)). Aspartate 1157 functions as the Proton donor; for dehydratase activity in the catalytic mechanism. Residues 1426–1469 (IINEQQQQQQQQQQQQQQQQQQQQQLLNNENNKESLKNLLVNCN) are a coiled coil. The Carrier domain occupies 2336–2413 (SSSTNVKNKF…MVYQIINDSL (78 aa)). Serine 2373 carries the post-translational modification O-(pantetheine 4'-phosphoryl)serine.

The cofactor is pantetheine 4'-phosphate.

Probable polyketide synthase. This chain is Probable polyketide synthase 24 (pks24), found in Dictyostelium discoideum (Social amoeba).